Consider the following 182-residue polypeptide: ADP-ribosylation factor-like protein 3 (182 aa).

The N-myristoyl glycine moiety is linked to residue Gly2. Ser5 bears the Phosphoserine mark. GTP is bound by residues 24–31, Thr48, 67–71, Gly70, 126–129, and 159–161; these read GLDNAGKT, DIGGQ, NKQD, and SAL. Mg(2+) is bound by residues Thr31 and Thr48.

Belongs to the small GTPase superfamily. Arf family. Found in a complex with ARL3, RP2 and UNC119 (or UNC119B); RP2 induces hydrolysis of GTP ARL3 in the complex, leading to the release of UNC119 (or UNC119B). Interacts with RP2; interaction is direct and stimulated with the activated GTP-bound form of ARL3. Interacts with SYS1. Interacts with ARL2BP; the GTP-bound form interacts with ARL2BP. Microtubule-associated protein. Does not interact with TBCC. Interacts with RP2. Interacts with PDE6D; the interaction occurs specifically with the GTP-bound form of ARL3. Interacts with GGA1; the interaction recruits PKD1:PKD2 complex to trans-Golgi network and is required for ciliary targeting of PKD1:PKD2 complex. Interacts with DNAAF9.

It is found in the golgi apparatus membrane. The protein resides in the cytoplasm. It localises to the cytoskeleton. Its subcellular location is the spindle. The protein localises to the nucleus. It is found in the microtubule organizing center. The protein resides in the centrosome. It localises to the cell projection. Its subcellular location is the cilium. Functionally, small GTP-binding protein which cycles between an inactive GDP-bound and an active GTP-bound form, and the rate of cycling is regulated by guanine nucleotide exchange factors (GEF) and GTPase-activating proteins (GAP). Required for normal cytokinesis and cilia signaling. Requires assistance from GTPase-activating proteins (GAPs) like RP2 and PDE6D, in order to cycle between inactive GDP-bound and active GTP-bound forms. Required for targeting proteins to the cilium, including myristoylated NPHP3 and prenylated INPP5E. Targets NPHP3 to the ciliary membrane by releasing myristoylated NPHP3 from UNC119B cargo adapter into the cilium. Required for PKD1:PKD2 complex targeting from the trans-Golgi network to the cilium. In Bos taurus (Bovine), this protein is ADP-ribosylation factor-like protein 3 (ARL3).